A 298-amino-acid chain; its full sequence is GTPase Era (298 aa).

In terms of domain architecture, Era-type G spans 4 to 171 (RAGFVALIGR…KEKIVSFLPE (168 aa)). Positions 12–19 (GRTNVGKS) are G1. Residue 12–19 (GRTNVGKS) coordinates GTP. The G2 stretch occupies residues 38 to 42 (QTTRN). Residues 59-62 (DTPG) form a G3 region. GTP contacts are provided by residues 59 to 63 (DTPGI) and 121 to 124 (NKID). Residues 121–124 (NKID) form a G4 region. The interval 150 to 152 (ISA) is G5. A KH type-2 domain is found at 202–280 (LEEEVPHGVY…FLQLWVKVRK (79 aa)).

Belongs to the TRAFAC class TrmE-Era-EngA-EngB-Septin-like GTPase superfamily. Era GTPase family. Monomer.

Its subcellular location is the cytoplasm. The protein resides in the cell membrane. Its function is as follows. An essential GTPase that binds both GDP and GTP, with rapid nucleotide exchange. Plays a role in 16S rRNA processing and 30S ribosomal subunit biogenesis and possibly also in cell cycle regulation and energy metabolism. This chain is GTPase Era, found in Caldanaerobacter subterraneus subsp. tengcongensis (strain DSM 15242 / JCM 11007 / NBRC 100824 / MB4) (Thermoanaerobacter tengcongensis).